We begin with the raw amino-acid sequence, 53 residues long: Antitoxin RelB3 (53 aa).

As to quaternary structure, forms heterodimers with RelE and possibly a heterotetramer RelE3-RelB3(2)-RelE3 from 2 heterodimers. The heterotetramer is probably not very stable in solution.

Functionally, antitoxin component of a type II toxin-antitoxin (TA) system. Probably neutralizes the toxic activity of cognate toxin RelE. The polypeptide is Antitoxin RelB3 (relB3) (Methanocaldococcus jannaschii (strain ATCC 43067 / DSM 2661 / JAL-1 / JCM 10045 / NBRC 100440) (Methanococcus jannaschii)).